The following is a 617-amino-acid chain: tRNA uridine 5-carboxymethylaminomethyl modification enzyme MnmG (617 aa).

FAD contacts are provided by residues 9 to 14 (GAGHAG), Val-120, and Thr-175. An NAD(+)-binding site is contributed by 267–281 (GPRYCPSIEDKVVRF). Gln-364 contacts FAD.

The protein belongs to the MnmG family. Homodimer. Heterotetramer of two MnmE and two MnmG subunits. The cofactor is FAD.

It is found in the cytoplasm. NAD-binding protein involved in the addition of a carboxymethylaminomethyl (cmnm) group at the wobble position (U34) of certain tRNAs, forming tRNA-cmnm(5)s(2)U34. This chain is tRNA uridine 5-carboxymethylaminomethyl modification enzyme MnmG, found in Onion yellows phytoplasma (strain OY-M).